A 92-amino-acid chain; its full sequence is Small ribosomal subunit protein uS19 (92 aa).

The protein belongs to the universal ribosomal protein uS19 family.

Functionally, protein S19 forms a complex with S13 that binds strongly to the 16S ribosomal RNA. The protein is Small ribosomal subunit protein uS19 of Corynebacterium diphtheriae (strain ATCC 700971 / NCTC 13129 / Biotype gravis).